A 55-amino-acid polypeptide reads, in one-letter code: Sporulation killing factor (55 aa).

The propeptide occupies 1–29 (MKRNQKEWESVSKKGLMKPGGTSIVKAAG). Cys-30 and Cys-45 are oxidised to a cystine. The cyclopeptide (Cys-Ile) cross-link spans 30–55 (CMGCWASKSIAMTRVCALPHPAMRAI). A cross-link (2-(S-cysteinyl)-methionine (Cys-Met)) is located at residues 33–41 (CWASKSIAM).

Post-translationally, this is a cyclic peptide. The first step in SKF maturation is probably thioether bond formation.

The protein localises to the secreted. Produces a 26-residue extracellular sporulation killing factor (SKF) that induces the lysis of other B.subtilis cells that have not entered the sporulation pathway, providing a source of nutrients to support sporulation, and at the same time delaying commitment to the energetically expensive and irreversible onset of sporulation. Can also inhibit growth of other bacteria at high concentrations. Addition of SKF to solid cultures induces killing, but it is much less effective than SDP (AC O34344). Has a role in protecting the secreted lipase LipA against proteolysis, either by modulating its folding or by acting as a protease inhibitor. The sequence is that of Sporulation killing factor from Bacillus subtilis (strain 168).